Here is a 156-residue protein sequence, read N- to C-terminus: ATP synthase subunit b (156 aa).

The chain crosses the membrane as a helical span at residues Leu-7–Pro-27.

Belongs to the ATPase B chain family. As to quaternary structure, F-type ATPases have 2 components, F(1) - the catalytic core - and F(0) - the membrane proton channel. F(1) has five subunits: alpha(3), beta(3), gamma(1), delta(1), epsilon(1). F(0) has three main subunits: a(1), b(2) and c(10-14). The alpha and beta chains form an alternating ring which encloses part of the gamma chain. F(1) is attached to F(0) by a central stalk formed by the gamma and epsilon chains, while a peripheral stalk is formed by the delta and b chains.

The protein localises to the cell inner membrane. F(1)F(0) ATP synthase produces ATP from ADP in the presence of a proton or sodium gradient. F-type ATPases consist of two structural domains, F(1) containing the extramembraneous catalytic core and F(0) containing the membrane proton channel, linked together by a central stalk and a peripheral stalk. During catalysis, ATP synthesis in the catalytic domain of F(1) is coupled via a rotary mechanism of the central stalk subunits to proton translocation. Functionally, component of the F(0) channel, it forms part of the peripheral stalk, linking F(1) to F(0). The chain is ATP synthase subunit b from Polynucleobacter necessarius subsp. necessarius (strain STIR1).